The following is a 406-amino-acid chain: MTFPVEKVRADFPILQREVNGLPLAYLDSAASAQKPNQVIDAESAFYRHGYAAVHRGIHTLSAQATESMENVRKQASRFINARSAEELVFVRGTTEGINLVANSWGTENIRAGDNIIISEMEHHANIVPWQMLCERKGAELRVIPLHPDGTLRLETLAALFDDRTRLLAITHVSNVLGTENPLPDMIALARQHGAKVLVDGAQAVMHHAVDVQALDCDFYVFSGHKLYGPTGIGILYVKEALLQEMPPWEGGGSMISTVSLTQGTTWAKAPWRFEAGTPNTGGIIGLGAAIDYVTSLGLDKIGDYEQMLMRYALEQLAQVPDITLYGPAQRLGVIAFNLGNHHAYDVGSFLDNYGIAVRTGHHCAMPLMAWYGVPAMCRASLAMYNTHEEVDRLVAGLTRIHRLLG.

An N6-(pyridoxal phosphate)lysine modification is found at Lys226. Cys364 functions as the Cysteine persulfide intermediate in the catalytic mechanism.

Belongs to the class-V pyridoxal-phosphate-dependent aminotransferase family. Csd subfamily. In terms of assembly, homodimer. Interacts with SufE and the SufBCD complex composed of SufB, SufC and SufD. The interaction with SufE is required to mediate the direct transfer of the sulfur atom from the S-sulfanylcysteine. The cofactor is pyridoxal 5'-phosphate.

The protein resides in the cytoplasm. The catalysed reaction is (sulfur carrier)-H + L-cysteine = (sulfur carrier)-SH + L-alanine. It carries out the reaction L-selenocysteine + AH2 = hydrogenselenide + L-alanine + A + H(+). Its pathway is cofactor biosynthesis; iron-sulfur cluster biosynthesis. Functionally, cysteine desulfurases mobilize the sulfur from L-cysteine to yield L-alanine, an essential step in sulfur metabolism for biosynthesis of a variety of sulfur-containing biomolecules. Component of the suf operon, which is activated and required under specific conditions such as oxidative stress and iron limitation. Acts as a potent selenocysteine lyase in vitro, that mobilizes selenium from L-selenocysteine. Selenocysteine lyase activity is however unsure in vivo. In Salmonella agona (strain SL483), this protein is Cysteine desulfurase.